A 271-amino-acid chain; its full sequence is MAGPQQQPPYLHLAELTASQFLEIWKHFDADGNGYIEGKELENFFQELEKARKGSGMMSKSDNFGEKMKEFMQKYDKNSDGKIEMAELAQILPTEENFLLCFRQHVGSSAEFMEAWRKYDTDRSGYIEANELKGFLSDLLKKANRPYDEPKLQEYTQTILRMFDLNGDGKLGLSEMSRLLPVQENFLLKFQGMKLTSEEFNAIFTFYDKDGSGYIDENELDALLKDLYEKNKKEMNIQQLTTYRKSVMSLAEAGKLYRKDLEIVLCSEPPM.

6 EF-hand domains span residues 16–51 (LTAS…LEKA), 63–98 (NFGE…EENF), 107–142 (GSSA…LLKK), 151–186 (KLQE…QENF), 195–230 (LTSE…LYEK), and 235–270 (MNIQ…SEPP). Ca(2+) contacts are provided by aspartate 29, aspartate 31, asparagine 33, tyrosine 35, glutamate 40, aspartate 76, asparagine 78, aspartate 80, lysine 82, glutamate 87, aspartate 120, aspartate 122, serine 124, tyrosine 126, glutamate 131, aspartate 164, asparagine 166, aspartate 168, lysine 170, glutamate 175, aspartate 208, aspartate 210, serine 212, tyrosine 214, and glutamate 219. The residue at position 214 (tyrosine 214) is a Phosphotyrosine.

Belongs to the calbindin family.

The protein localises to the synapse. It is found in the cell projection. Its subcellular location is the dendrite. Calcium-binding protein involved in calcium homeostasis and signal transduction. It plays a critical role in buffering intracellular calcium levels and modulating calcium-dependent signaling pathways. Predominantly expressed in specific neuronal populations, influences synaptic plasticity and neuronal excitability, contributing to learning and memory. During embryonic development, it facilitates neuronal differentiation and maturation. The polypeptide is Calretinin (Calb2) (Rattus norvegicus (Rat)).